Consider the following 557-residue polypeptide: Potassium-transporting ATPase potassium-binding subunit (557 aa).

12 consecutive transmembrane segments (helical) span residues 5-25, 63-83, 132-152, 170-190, 253-273, 283-303, 329-349, 356-376, 379-399, 416-436, 484-504, and 526-546; these read GFLL…PLGS, LCAI…MLLG, GLTV…FALI, LLRI…LFFI, FVQM…FGEV, LLWA…WAEV, VLVS…AVIA, ALGG…FGGV, GLYG…LMIG, LTAL…ALAM, LLAF…MAIA, and LFVG…FIPA.

It belongs to the KdpA family. As to quaternary structure, the system is composed of three essential subunits: KdpA, KdpB and KdpC.

It is found in the cell inner membrane. In terms of biological role, part of the high-affinity ATP-driven potassium transport (or Kdp) system, which catalyzes the hydrolysis of ATP coupled with the electrogenic transport of potassium into the cytoplasm. This subunit binds the periplasmic potassium ions and delivers the ions to the membrane domain of KdpB through an intramembrane tunnel. The sequence is that of Potassium-transporting ATPase potassium-binding subunit from Escherichia coli O9:H4 (strain HS).